Here is a 67-residue protein sequence, read N- to C-terminus: ATP synthase F(0) complex subunit 8 (67 aa).

A helical membrane pass occupies residues 8-24 (TWFITILSMLITLFILF). K54 is subject to N6-acetyllysine; alternate. K54 bears the N6-succinyllysine; alternate mark. An N6-acetyllysine modification is found at K57.

The protein belongs to the ATPase protein 8 family. Component of the ATP synthase complex composed at least of ATP5F1A/subunit alpha, ATP5F1B/subunit beta, ATP5MC1/subunit c (homooctomer), MT-ATP6/subunit a, MT-ATP8/subunit 8, ATP5ME/subunit e, ATP5MF/subunit f, ATP5MG/subunit g, ATP5MK/subunit k, ATP5MJ/subunit j, ATP5F1C/subunit gamma, ATP5F1D/subunit delta, ATP5F1E/subunit epsilon, ATP5PF/subunit F6, ATP5PB/subunit b, ATP5PD/subunit d, ATP5PO/subunit OSCP. ATP synthase complex consists of a soluble F(1) head domain (subunits alpha(3) and beta(3)) - the catalytic core - and a membrane F(0) domain - the membrane proton channel (subunits c, a, 8, e, f, g, k and j). These two domains are linked by a central stalk (subunits gamma, delta, and epsilon) rotating inside the F1 region and a stationary peripheral stalk (subunits F6, b, d, and OSCP). Interacts with PRICKLE3.

The protein localises to the mitochondrion membrane. Functionally, subunit 8, of the mitochondrial membrane ATP synthase complex (F(1)F(0) ATP synthase or Complex V) that produces ATP from ADP in the presence of a proton gradient across the membrane which is generated by electron transport complexes of the respiratory chain. ATP synthase complex consist of a soluble F(1) head domain - the catalytic core - and a membrane F(1) domain - the membrane proton channel. These two domains are linked by a central stalk rotating inside the F(1) region and a stationary peripheral stalk. During catalysis, ATP synthesis in the catalytic domain of F(1) is coupled via a rotary mechanism of the central stalk subunits to proton translocation. In vivo, can only synthesize ATP although its ATP hydrolase activity can be activated artificially in vitro. Part of the complex F(0) domain. In Dugong dugon (Dugong), this protein is ATP synthase F(0) complex subunit 8.